We begin with the raw amino-acid sequence, 723 residues long: Fatty acid oxidation complex subunit alpha (723 aa).

Residues 1–189 (MIYQANTLQV…KVGLLDAIVE (189 aa)) are enoyl-CoA hydratase/isomerase. A substrate-binding site is contributed by Asp-296. A 3-hydroxyacyl-CoA dehydrogenase region spans residues 311–723 (NKATERAAVL…FYDGQQASSL (413 aa)). Residues Met-325, Asp-344, 401–403 (VVE), Lys-408, and Ser-430 contribute to the NAD(+) site. His-451 (for 3-hydroxyacyl-CoA dehydrogenase activity) is an active-site residue. NAD(+) is bound at residue Asn-454. Substrate is bound by residues Asn-501 and Tyr-661.

In the N-terminal section; belongs to the enoyl-CoA hydratase/isomerase family. The protein in the C-terminal section; belongs to the 3-hydroxyacyl-CoA dehydrogenase family. As to quaternary structure, heterotetramer of two alpha chains (FadB) and two beta chains (FadA).

It carries out the reaction a (3S)-3-hydroxyacyl-CoA + NAD(+) = a 3-oxoacyl-CoA + NADH + H(+). The enzyme catalyses a (3S)-3-hydroxyacyl-CoA = a (2E)-enoyl-CoA + H2O. It catalyses the reaction a 4-saturated-(3S)-3-hydroxyacyl-CoA = a (3E)-enoyl-CoA + H2O. The catalysed reaction is (3S)-3-hydroxybutanoyl-CoA = (3R)-3-hydroxybutanoyl-CoA. It carries out the reaction a (3Z)-enoyl-CoA = a 4-saturated (2E)-enoyl-CoA. The enzyme catalyses a (3E)-enoyl-CoA = a 4-saturated (2E)-enoyl-CoA. It functions in the pathway lipid metabolism; fatty acid beta-oxidation. Functionally, involved in the aerobic and anaerobic degradation of long-chain fatty acids via beta-oxidation cycle. Catalyzes the formation of 3-oxoacyl-CoA from enoyl-CoA via L-3-hydroxyacyl-CoA. It can also use D-3-hydroxyacyl-CoA and cis-3-enoyl-CoA as substrate. The polypeptide is Fatty acid oxidation complex subunit alpha (Vibrio atlanticus (strain LGP32) (Vibrio splendidus (strain Mel32))).